The chain runs to 259 residues: ATP synthase subunit b 3 (259 aa).

A helical transmembrane segment spans residues 5-27 (WWTLGLQAINVLILIWILSRFLF).

Belongs to the ATPase B chain family. F-type ATPases have 2 components, F(1) - the catalytic core - and F(0) - the membrane proton channel. F(1) has five subunits: alpha(3), beta(3), gamma(1), delta(1), epsilon(1). F(0) has three main subunits: a(1), b(2) and c(10-14). The alpha and beta chains form an alternating ring which encloses part of the gamma chain. F(1) is attached to F(0) by a central stalk formed by the gamma and epsilon chains, while a peripheral stalk is formed by the delta and b chains.

The protein localises to the cell inner membrane. Functionally, f(1)F(0) ATP synthase produces ATP from ADP in the presence of a proton or sodium gradient. F-type ATPases consist of two structural domains, F(1) containing the extramembraneous catalytic core and F(0) containing the membrane proton channel, linked together by a central stalk and a peripheral stalk. During catalysis, ATP synthesis in the catalytic domain of F(1) is coupled via a rotary mechanism of the central stalk subunits to proton translocation. In terms of biological role, component of the F(0) channel, it forms part of the peripheral stalk, linking F(1) to F(0). This Beijerinckia indica subsp. indica (strain ATCC 9039 / DSM 1715 / NCIMB 8712) protein is ATP synthase subunit b 3.